The following is a 139-amino-acid chain: Deoxyuridine 5'-triphosphate nucleotidohydrolase (139 aa).

Residues 58–60 (RSG), asparagine 71, 75–77 (LID), and methionine 85 each bind substrate.

The protein belongs to the dUTPase family. The cofactor is Mg(2+).

It carries out the reaction dUTP + H2O = dUMP + diphosphate + H(+). The protein operates within pyrimidine metabolism; dUMP biosynthesis; dUMP from dCTP (dUTP route): step 2/2. Its function is as follows. This enzyme is involved in nucleotide metabolism: it produces dUMP, the immediate precursor of thymidine nucleotides and it decreases the intracellular concentration of dUTP so that uracil cannot be incorporated into DNA. The chain is Deoxyuridine 5'-triphosphate nucleotidohydrolase from Gamma-proteobacterium EBAC31A08.